A 227-amino-acid polypeptide reads, in one-letter code: Cytochrome c oxidase subunit 2 (227 aa).

Residues 1–14 (MAHPVQLGLQDATS) are Mitochondrial intermembrane-facing. The chain crosses the membrane as a helical span at residues 15–45 (PVMEELVTFHDHALMAMFLISFLILYALSAT). The Mitochondrial matrix segment spans residues 46 to 59 (LTTKLTNTNITDAQ). A helical membrane pass occupies residues 60-87 (EMETIWTILPAVILVLIALPSLRILYMT). The Mitochondrial intermembrane portion of the chain corresponds to 88 to 227 (DEINNPSFTI…IFEMGPVFTL (140 aa)). Positions 161, 196, 198, 200, 204, and 207 each coordinate Cu cation. Mg(2+) is bound at residue E198.

This sequence belongs to the cytochrome c oxidase subunit 2 family. In terms of assembly, component of the cytochrome c oxidase (complex IV, CIV), a multisubunit enzyme composed of 14 subunits. The complex is composed of a catalytic core of 3 subunits MT-CO1, MT-CO2 and MT-CO3, encoded in the mitochondrial DNA, and 11 supernumerary subunits COX4I, COX5A, COX5B, COX6A, COX6B, COX6C, COX7A, COX7B, COX7C, COX8 and NDUFA4, which are encoded in the nuclear genome. The complex exists as a monomer or a dimer and forms supercomplexes (SCs) in the inner mitochondrial membrane with NADH-ubiquinone oxidoreductase (complex I, CI) and ubiquinol-cytochrome c oxidoreductase (cytochrome b-c1 complex, complex III, CIII), resulting in different assemblies (supercomplex SCI(1)III(2)IV(1) and megacomplex MCI(2)III(2)IV(2)). Found in a complex with TMEM177, COA6, COX18, COX20, SCO1 and SCO2. Interacts with TMEM177 in a COX20-dependent manner. Interacts with COX20. Interacts with COX16. It depends on Cu cation as a cofactor.

Its subcellular location is the mitochondrion inner membrane. The catalysed reaction is 4 Fe(II)-[cytochrome c] + O2 + 8 H(+)(in) = 4 Fe(III)-[cytochrome c] + 2 H2O + 4 H(+)(out). In terms of biological role, component of the cytochrome c oxidase, the last enzyme in the mitochondrial electron transport chain which drives oxidative phosphorylation. The respiratory chain contains 3 multisubunit complexes succinate dehydrogenase (complex II, CII), ubiquinol-cytochrome c oxidoreductase (cytochrome b-c1 complex, complex III, CIII) and cytochrome c oxidase (complex IV, CIV), that cooperate to transfer electrons derived from NADH and succinate to molecular oxygen, creating an electrochemical gradient over the inner membrane that drives transmembrane transport and the ATP synthase. Cytochrome c oxidase is the component of the respiratory chain that catalyzes the reduction of oxygen to water. Electrons originating from reduced cytochrome c in the intermembrane space (IMS) are transferred via the dinuclear copper A center (CU(A)) of subunit 2 and heme A of subunit 1 to the active site in subunit 1, a binuclear center (BNC) formed by heme A3 and copper B (CU(B)). The BNC reduces molecular oxygen to 2 water molecules using 4 electrons from cytochrome c in the IMS and 4 protons from the mitochondrial matrix. This chain is Cytochrome c oxidase subunit 2 (MT-CO2), found in Theropithecus gelada (Gelada baboon).